A 194-amino-acid polypeptide reads, in one-letter code: Peptidyl-tRNA hydrolase (194 aa).

Residue Tyr17 coordinates tRNA. Residue His22 is the Proton acceptor of the active site. Tyr68, Asn70, and Asn116 together coordinate tRNA.

Belongs to the PTH family. In terms of assembly, monomer.

It is found in the cytoplasm. It carries out the reaction an N-acyl-L-alpha-aminoacyl-tRNA + H2O = an N-acyl-L-amino acid + a tRNA + H(+). Its function is as follows. Hydrolyzes ribosome-free peptidyl-tRNAs (with 1 or more amino acids incorporated), which drop off the ribosome during protein synthesis, or as a result of ribosome stalling. In terms of biological role, catalyzes the release of premature peptidyl moieties from peptidyl-tRNA molecules trapped in stalled 50S ribosomal subunits, and thus maintains levels of free tRNAs and 50S ribosomes. In Pseudomonas putida (strain ATCC 700007 / DSM 6899 / JCM 31910 / BCRC 17059 / LMG 24140 / F1), this protein is Peptidyl-tRNA hydrolase.